The chain runs to 336 residues: Aspartate--ammonia ligase (336 aa).

Belongs to the class-II aminoacyl-tRNA synthetase family. AsnA subfamily.

It is found in the cytoplasm. It carries out the reaction L-aspartate + NH4(+) + ATP = L-asparagine + AMP + diphosphate + H(+). The protein operates within amino-acid biosynthesis; L-asparagine biosynthesis; L-asparagine from L-aspartate (ammonia route): step 1/1. This chain is Aspartate--ammonia ligase, found in Ruminiclostridium cellulolyticum (strain ATCC 35319 / DSM 5812 / JCM 6584 / H10) (Clostridium cellulolyticum).